We begin with the raw amino-acid sequence, 183 residues long: Large ribosomal subunit protein uL5 (183 aa).

The protein belongs to the universal ribosomal protein uL5 family. In terms of assembly, part of the 50S ribosomal subunit; part of the 5S rRNA/L5/L18/L25 subcomplex. Contacts the 5S rRNA and the P site tRNA. Forms a bridge to the 30S subunit in the 70S ribosome.

In terms of biological role, this is one of the proteins that bind and probably mediate the attachment of the 5S RNA into the large ribosomal subunit, where it forms part of the central protuberance. In the 70S ribosome it contacts protein S13 of the 30S subunit (bridge B1b), connecting the 2 subunits; this bridge is implicated in subunit movement. Contacts the P site tRNA; the 5S rRNA and some of its associated proteins might help stabilize positioning of ribosome-bound tRNAs. In Flavobacterium johnsoniae (strain ATCC 17061 / DSM 2064 / JCM 8514 / BCRC 14874 / CCUG 350202 / NBRC 14942 / NCIMB 11054 / UW101) (Cytophaga johnsonae), this protein is Large ribosomal subunit protein uL5.